We begin with the raw amino-acid sequence, 269 residues long: Tryptophan synthase alpha chain (269 aa).

Catalysis depends on proton acceptor residues Glu49 and Asp60.

Belongs to the TrpA family. Tetramer of two alpha and two beta chains.

It carries out the reaction (1S,2R)-1-C-(indol-3-yl)glycerol 3-phosphate + L-serine = D-glyceraldehyde 3-phosphate + L-tryptophan + H2O. It functions in the pathway amino-acid biosynthesis; L-tryptophan biosynthesis; L-tryptophan from chorismate: step 5/5. The alpha subunit is responsible for the aldol cleavage of indoleglycerol phosphate to indole and glyceraldehyde 3-phosphate. The chain is Tryptophan synthase alpha chain from Actinobacillus succinogenes (strain ATCC 55618 / DSM 22257 / CCUG 43843 / 130Z).